The sequence spans 582 residues: DNA mismatch repair protein MutL (582 aa).

It belongs to the DNA mismatch repair MutL/HexB family.

In terms of biological role, this protein is involved in the repair of mismatches in DNA. It is required for dam-dependent methyl-directed DNA mismatch repair. May act as a 'molecular matchmaker', a protein that promotes the formation of a stable complex between two or more DNA-binding proteins in an ATP-dependent manner without itself being part of a final effector complex. The chain is DNA mismatch repair protein MutL from Buchnera aphidicola subsp. Schizaphis graminum (strain Sg).